We begin with the raw amino-acid sequence, 201 residues long: ATP-dependent Clp protease proteolytic subunit (201 aa).

The active-site Nucleophile is S97. Residue H122 is part of the active site.

The protein belongs to the peptidase S14 family. In terms of assembly, fourteen ClpP subunits assemble into 2 heptameric rings which stack back to back to give a disk-like structure with a central cavity, resembling the structure of eukaryotic proteasomes.

The protein resides in the cytoplasm. It carries out the reaction Hydrolysis of proteins to small peptides in the presence of ATP and magnesium. alpha-casein is the usual test substrate. In the absence of ATP, only oligopeptides shorter than five residues are hydrolyzed (such as succinyl-Leu-Tyr-|-NHMec, and Leu-Tyr-Leu-|-Tyr-Trp, in which cleavage of the -Tyr-|-Leu- and -Tyr-|-Trp bonds also occurs).. Functionally, cleaves peptides in various proteins in a process that requires ATP hydrolysis. Has a chymotrypsin-like activity. Plays a major role in the degradation of misfolded proteins. The sequence is that of ATP-dependent Clp protease proteolytic subunit from Nitratidesulfovibrio vulgaris (strain ATCC 29579 / DSM 644 / CCUG 34227 / NCIMB 8303 / VKM B-1760 / Hildenborough) (Desulfovibrio vulgaris).